We begin with the raw amino-acid sequence, 104 residues long: Large ribosomal subunit protein bL21 (104 aa).

This sequence belongs to the bacterial ribosomal protein bL21 family. Part of the 50S ribosomal subunit. Contacts protein L20.

Its function is as follows. This protein binds to 23S rRNA in the presence of protein L20. The chain is Large ribosomal subunit protein bL21 from Tropheryma whipplei (strain TW08/27) (Whipple's bacillus).